Reading from the N-terminus, the 592-residue chain is Inactive glycosyltransferase 25 family member 3 (592 aa).

Positions 1 to 19 (MHVARLLPLLLLLGQQLRA) are cleaved as a signal peptide. N-linked (GlcNAc...) asparagine glycosylation is found at N72, N150, N234, and N357. The disordered stretch occupies residues 540–592 (AEWLSDTETSSPWDDDSGRLISQTGSQKALRGPHLHLTGSSGHSLHPHHRDEL). A Prevents secretion from ER motif is present at residues 589–592 (RDEL).

Belongs to the glycosyltransferase 25 family.

It is found in the endoplasmic reticulum lumen. Functionally, probable cell adhesion protein involved in leukocyte transmigration across the blood-brain barrier. Does not express any beta-galactosyltransferase activity in vitro. This is Inactive glycosyltransferase 25 family member 3 (Cercam) from Mus musculus (Mouse).